The following is a 206-amino-acid chain: MARYLGPKLKLSRREGTDLFLKSGVRAIDSKCKIDTAPGQHGARKPRLSDYGSQLREKQKVRRIYGILERQFRNYYKEANRLKGNTGENLLVLLEGRLDNVVYRMGFAATRAEARQLVSHKAIVVNGRVVNIPSFQVSVDDVVAIREKSKKQARIKASLELAEQKEKPTWLEVDSAKMEGVFKRVPERSDLSADINEHLIVELYSK.

One can recognise an S4 RNA-binding domain in the interval 96–156; it reads GRLDNVVYRM…EKSKKQARIK (61 aa).

It belongs to the universal ribosomal protein uS4 family. As to quaternary structure, part of the 30S ribosomal subunit. Contacts protein S5. The interaction surface between S4 and S5 is involved in control of translational fidelity.

Its function is as follows. One of the primary rRNA binding proteins, it binds directly to 16S rRNA where it nucleates assembly of the body of the 30S subunit. With S5 and S12 plays an important role in translational accuracy. This is Small ribosomal subunit protein uS4 from Actinobacillus succinogenes (strain ATCC 55618 / DSM 22257 / CCUG 43843 / 130Z).